The sequence spans 433 residues: Enolase (433 aa).

Gln-164 is a (2R)-2-phosphoglycerate binding site. The Proton donor role is filled by Glu-206. Asp-243, Glu-289, and Asp-316 together coordinate Mg(2+). The (2R)-2-phosphoglycerate site is built by Lys-341, Arg-370, Ser-371, and Lys-392. Lys-341 serves as the catalytic Proton acceptor.

It belongs to the enolase family. Mg(2+) serves as cofactor.

It localises to the cytoplasm. The protein localises to the secreted. It is found in the cell surface. The catalysed reaction is (2R)-2-phosphoglycerate = phosphoenolpyruvate + H2O. The protein operates within carbohydrate degradation; glycolysis; pyruvate from D-glyceraldehyde 3-phosphate: step 4/5. Functionally, catalyzes the reversible conversion of 2-phosphoglycerate (2-PG) into phosphoenolpyruvate (PEP). It is essential for the degradation of carbohydrates via glycolysis. The chain is Enolase from Borreliella burgdorferi (strain ZS7) (Borrelia burgdorferi).